Consider the following 461-residue polypeptide: MDLSAAAALCLWLLSACRPRDGLEAAAVLRAAGAGPAWSPGGGGGGRTLARAPGPSALQAAAVPGPRAVRRAAGSGFRNGSVVPHHFMMSLYRSLAGRAPVAAASGHGRVDTITGFTDQATQDETAAAEPGQSFLFDVSSLSEADEVVNAELRVLRRRSPEPDRDSATLLPRLLLSTCPDEAGTAHLLHSRAAEPLGGARWEAFDVTDAVQSHRRWPRASRKFCLVLRAVTASESSPLALRRLGFGWPGGGDGGGTAAEERALLVISSRTQRKESLFREIRAQARALRAAAEPPPDPGPGAGSRKANLGGRRRRRTALAGTRGAQGSGGGGGGGGGGGGGGGGGGGGAGRGHGRRGRSRCSRKSLHVDFKELGWDDWIIAPLDYEAYHCEGVCDFPLRSHLEPTNHAIIQTLLNSMAPDAAPASCCVPARLSPISILYIDAANNVVYKQYEDMVVEACGCR.

An N-terminal signal peptide occupies residues 1–19; that stretch reads MDLSAAAALCLWLLSACRP. A propeptide spanning residues 20–315 is cleaved from the precursor; it reads RDGLEAAAVL…ANLGGRRRRR (296 aa). An N-linked (GlcNAc...) asparagine glycan is attached at Asn79. Positions 287–360 are disordered; the sequence is LRAAAEPPPD…GHGRRGRSRC (74 aa). A compositionally biased stretch (gly residues) spans 323–350; sequence GAQGSGGGGGGGGGGGGGGGGGGGGAGR. Positions 351–360 are enriched in basic residues; it reads GHGRRGRSRC. 3 disulfide bridges follow: Cys360–Cys426, Cys389–Cys458, and Cys393–Cys460.

Belongs to the TGF-beta family. Homodimer; disulfide-linked.

The protein localises to the secreted. The chain is Growth/differentiation factor 7 (Gdf7) from Mus musculus (Mouse).